Consider the following 37-residue polypeptide: Large ribosomal subunit protein bL36 (37 aa).

It belongs to the bacterial ribosomal protein bL36 family.

The protein is Large ribosomal subunit protein bL36 of Gloeobacter violaceus (strain ATCC 29082 / PCC 7421).